A 570-amino-acid chain; its full sequence is Guanine nucleotide-binding protein alpha-3 subunit (570 aa).

Residues 10–113 (RETLRAYLSK…WIEAIKHAIE (104 aa)) form the PH domain. One can recognise a G-alpha domain in the interval 144 to 570 (PVLKLLLLGT…IISKTLEFYC (427 aa)). A G1 motif region spans residues 147–160 (KLLLLGTGESGKST). 152–159 (GTGESGKS) contacts GTP. Ser-159 is a binding site for Mg(2+). Low complexity-rich tracts occupy residues 254–272 (NNNS…SSSS) and 290–316 (NSNS…RSNS). Residues 254–321 (NNNSNSSSLK…NRSNSDGSSN (68 aa)) are disordered. Residues 386–394 (DILKSRATT) are G2 motif. GTP contacts are provided by residues 388-394 (LKSRATT), 414-418 (DVAGQ), 483-486 (NKID), and Ala-544. Residue Thr-394 participates in Mg(2+) binding. Residues 410–419 (FRIVDVAGQR) are G3 motif. Residues 479–486 (ILFLNKID) are G4 motif. The interval 542-547 (TCATDT) is G5 motif.

It belongs to the G-alpha family. As to quaternary structure, g proteins are composed of 3 units; alpha, beta and gamma. The alpha chain contains the guanine nucleotide binding site.

In terms of biological role, guanine nucleotide-binding proteins (G proteins) are involved as modulators or transducers in various transmembrane signaling systems. G alpha-3 plays a role in development. G alpha-3 mutants fail to aggregate. In Dictyostelium discoideum (Social amoeba), this protein is Guanine nucleotide-binding protein alpha-3 subunit (gpaC).